Consider the following 125-residue polypeptide: Lectin (125 aa).

The 120-residue stretch at 1–120 (MDYEILFSDE…CGGARRVICE (120 aa)) folds into the C-type lectin domain. Disulfide bonds link cysteine 21/cysteine 119 and cysteine 96/cysteine 111.

In terms of assembly, homodimer.

Its function is as follows. Role in the defense system of the organism against microorganisms. This calcium-binding lectin binds galactose. The protein is Lectin of Polyandrocarpa misakiensis (Tunicate).